The primary structure comprises 154 residues: Superoxide dismutase [Cu-Zn] (154 aa).

The Cu cation site is built by histidine 47, histidine 49, and histidine 64. Cysteine 58 and cysteine 147 form a disulfide bridge. Positions 64, 72, 81, and 84 each coordinate Zn(2+). Cu cation is bound at residue histidine 121. Basic and acidic residues predominate over residues aspartate 125–lysine 137. Residues aspartate 125–cysteine 147 form a disordered region. Arginine 144 serves as a coordination point for substrate.

Belongs to the Cu-Zn superoxide dismutase family. In terms of assembly, homodimer. It depends on Cu cation as a cofactor. Zn(2+) is required as a cofactor.

The protein resides in the cytoplasm. It carries out the reaction 2 superoxide + 2 H(+) = H2O2 + O2. Functionally, destroys radicals which are normally produced within the cells and which are toxic to biological systems. The chain is Superoxide dismutase [Cu-Zn] from Aspergillus niger (strain ATCC MYA-4892 / CBS 513.88 / FGSC A1513).